Reading from the N-terminus, the 394-residue chain is MTNIIRQFLRQEAAGGLILIIAAAIALLMANSALQGIYQSFLDIPVSIKIASLDISKPLLLWINDGLMAVFFLVVGLEVKRELMEGSLAGRDKAVFPAIAALGGMLAPALIYLLFNGADEVTRQGWAIPAATDIAFALGVMALLGNRVPTGLKVFLLALAIIDDLGVIIIIALFYTQQVSLQSLGIAAAAIALLAYMNWRGVGKTSAYLLVGLVLWVCILKSGVHATLAGVIVGFMIPLHTQDQRSPSESLEHGLHPWVAYLILPLFAFANAGVSLQGVSLSGLTSLLPMGIATGLFIGKPLGIFTFSWLAVKLGIAKLPDAINFKQIFAVSVLCGIGFTMSIFIASLAFEGTDIALTTYSKLGILLGSTTAAVVGYSLLRLVLPARRKAVNVR.

11 consecutive transmembrane segments (helical) span residues 14-34, 59-79, 95-115, 125-145, 154-174, 179-199, 213-233, 254-274, 292-312, 328-348, and 363-383; these read AGGLILIIAAAIALLMANSAL, LLLWINDGLMAVFFLVVGLEV, VFPAIAALGGMLAPALIYLLF, GWAIPAATDIAFALGVMALLG, VFLLALAIIDDLGVIIIIALF, VSLQSLGIAAAAIALLAYMNW, LVLWVCILKSGVHATLAGVIV, GLHPWVAYLILPLFAFANAGV, IATGLFIGKPLGIFTFSWLAV, IFAVSVLCGIGFTMSIFIASL, and LGILLGSTTAAVVGYSLLRLV.

It belongs to the NhaA Na(+)/H(+) (TC 2.A.33) antiporter family.

Its subcellular location is the cell inner membrane. It catalyses the reaction Na(+)(in) + 2 H(+)(out) = Na(+)(out) + 2 H(+)(in). In terms of biological role, na(+)/H(+) antiporter that extrudes sodium in exchange for external protons. This chain is Na(+)/H(+) antiporter NhaA, found in Yersinia pseudotuberculosis serotype O:1b (strain IP 31758).